The primary structure comprises 537 residues: Chaperonin GroEL 2 (537 aa).

ATP-binding positions include 29–32 (TLGP), 86–90 (DGTTT), Gly413, 477–479 (NAA), and Asp493.

The protein belongs to the chaperonin (HSP60) family. Forms a cylinder of 14 subunits composed of two heptameric rings stacked back-to-back. Interacts with the co-chaperonin GroES.

It localises to the cytoplasm. It carries out the reaction ATP + H2O + a folded polypeptide = ADP + phosphate + an unfolded polypeptide.. Together with its co-chaperonin GroES, plays an essential role in assisting protein folding. The GroEL-GroES system forms a nano-cage that allows encapsulation of the non-native substrate proteins and provides a physical environment optimized to promote and accelerate protein folding. The protein is Chaperonin GroEL 2 of Rhodococcus jostii (strain RHA1).